Consider the following 501-residue polypeptide: Ribulose bisphosphate carboxylase large chain (501 aa).

Residues Asn-141 and Thr-191 each coordinate substrate. Lys-193 acts as the Proton acceptor in catalysis. Residue Lys-195 coordinates substrate. Lys-219, Asp-221, and Glu-222 together coordinate Mg(2+). Lys-219 is subject to N6-carboxylysine. The active-site Proton acceptor is the His-311. Substrate contacts are provided by Arg-312, His-344, and Ser-396.

It belongs to the RuBisCO large chain family. Type I subfamily. Heterohexadecamer of 8 large chains and 8 small chains. Mg(2+) is required as a cofactor.

It catalyses the reaction 2 (2R)-3-phosphoglycerate + 2 H(+) = D-ribulose 1,5-bisphosphate + CO2 + H2O. The catalysed reaction is D-ribulose 1,5-bisphosphate + O2 = 2-phosphoglycolate + (2R)-3-phosphoglycerate + 2 H(+). Its function is as follows. RuBisCO catalyzes two reactions: the carboxylation of D-ribulose 1,5-bisphosphate, the primary event in carbon dioxide fixation, as well as the oxidative fragmentation of the pentose substrate. Both reactions occur simultaneously and in competition at the same active site. This chain is Ribulose bisphosphate carboxylase large chain, found in Paraburkholderia phymatum (strain DSM 17167 / CIP 108236 / LMG 21445 / STM815) (Burkholderia phymatum).